The sequence spans 111 residues: uncharacterized protein (111 aa).

It to B.subtilis XkdW.

This is an uncharacterized protein from Bacillus subtilis (strain 168).